We begin with the raw amino-acid sequence, 249 residues long: 5'-nucleotidase SurE (249 aa).

The a divalent metal cation site is built by Asp8, Asp9, Ser39, and Asn91.

Belongs to the SurE nucleotidase family. It depends on a divalent metal cation as a cofactor.

Its subcellular location is the cytoplasm. It catalyses the reaction a ribonucleoside 5'-phosphate + H2O = a ribonucleoside + phosphate. In terms of biological role, nucleotidase that shows phosphatase activity on nucleoside 5'-monophosphates. In Pseudomonas savastanoi pv. phaseolicola (strain 1448A / Race 6) (Pseudomonas syringae pv. phaseolicola (strain 1448A / Race 6)), this protein is 5'-nucleotidase SurE.